The primary structure comprises 360 residues: C-C chemokine receptor-like 2 (360 aa).

The Extracellular segment spans residues 1–42 (MDNYTVAPDDEYDVLILDDYLDNSGPDQVPAPEFLSPQQVLQ). Asn-3 carries N-linked (GlcNAc...) asparagine glycosylation. A helical membrane pass occupies residues 43 to 63 (FCCAVFAVGLLDNVLAVFILV). The Cytoplasmic segment spans residues 64–73 (KYKGLKNLGN). Residues 74–94 (IYFLNLALSNLCFLLPLPFWA) traverse the membrane as a helical segment. Residues 95–109 (HTAAHGESPGNGTCK) lie on the Extracellular side of the membrane. N-linked (GlcNAc...) asparagine glycosylation occurs at Asn-105. Residues Cys-108 and Cys-185 are joined by a disulfide bond. Residues 110-130 (VLVGLHSSGLYSEVFSNILLL) form a helical membrane-spanning segment. The Cytoplasmic portion of the chain corresponds to 131–141 (VQGYRVFSQGR). A helical transmembrane segment spans residues 142-162 (LASIFTTVSCGIVACILAWAM). The Extracellular segment spans residues 163–202 (ATALSLPESVFYEPRMERQKHKCAFGKPHFLPIEAPLWKY). A helical transmembrane segment spans residues 203-223 (VLTSKMIILVLAFPLLVFIIC). The Cytoplasmic portion of the chain corresponds to 224-243 (CRQLRRRQSFRERQYDLHKP). A helical membrane pass occupies residues 244–264 (ALVITGVFLLMWAPYNTVLFL). Residues 265–285 (SAFQEHLSLQDEKSSYHLDAS) lie on the Extracellular side of the membrane. The helical transmembrane segment at 286 to 307 (VQVTQLVATTHCCVNPLLYLLL) threads the bilayer. At 308-360 (DRKAFMRYLRSLFPRCNDIPYQSSGGYQQAPPREGHGRPIELYSNLHQRQDII) the chain is on the cytoplasmic side.

The protein belongs to the G-protein coupled receptor 1 family. As to expression, expressed in macrophages, astrocytes, in glial cells. Constitutively expressed by mast cells. Detected in bronchial epithelium in OVA-induced airway inflammation. Up-regulated during dendritic cell (DC) maturation.

It localises to the cell membrane. Receptor for CCL19 and chemerin/RARRES2. Does not appear to be a signaling receptor, but may have a role in modulating chemokine-triggered immune responses by capturing and internalizing CCL19 or by presenting RARRES2 ligand to CMKLR1, a functional signaling receptor. Plays a critical role for the development of Th2 responses. The sequence is that of C-C chemokine receptor-like 2 (Ccrl2) from Mus musculus (Mouse).